The sequence spans 420 residues: Pregnancy-associated glycoprotein 2 (420 aa).

The N-terminal stretch at 1–15 is a signal peptide; sequence MKWLVILGLVALSDC. Residues Asn-56 and Asn-79 are each glycosylated (N-linked (GlcNAc...) asparagine). The region spanning 76–417 is the Peptidase A1 domain; that stretch reads YVGNISIGTP…DEGQNRIGLA (342 aa). Residue Asp-94 is part of the active site. 2 disulfides stabilise this stretch: Cys-107–Cys-112 and Cys-268–Cys-272. Residue Asp-277 is part of the active site. Residues Cys-341 and Cys-376 are joined by a disulfide bond.

The protein belongs to the peptidase A1 family. As to expression, expressed throughout the chorion, with the signal localized exclusively over the trophectoderm.

It is found in the secreted. The protein localises to the extracellular space. This is Pregnancy-associated glycoprotein 2 (PAG2) from Sus scrofa (Pig).